Here is a 286-residue protein sequence, read N- to C-terminus: Shikimate dehydrogenase (NADP(+)) (286 aa).

Shikimate contacts are provided by residues S20–S22 and T65. The active-site Proton acceptor is the K69. NADP(+) is bound at residue D81. Shikimate contacts are provided by N90 and D105. Residues G128–A132 and T217 contribute to the NADP(+) site. Y219 is a binding site for shikimate. G240 contributes to the NADP(+) binding site.

Belongs to the shikimate dehydrogenase family. In terms of assembly, homodimer.

It catalyses the reaction shikimate + NADP(+) = 3-dehydroshikimate + NADPH + H(+). It functions in the pathway metabolic intermediate biosynthesis; chorismate biosynthesis; chorismate from D-erythrose 4-phosphate and phosphoenolpyruvate: step 4/7. Its function is as follows. Involved in the biosynthesis of the chorismate, which leads to the biosynthesis of aromatic amino acids. Catalyzes the reversible NADPH linked reduction of 3-dehydroshikimate (DHSA) to yield shikimate (SA). This is Shikimate dehydrogenase (NADP(+)) from Syntrophobacter fumaroxidans (strain DSM 10017 / MPOB).